The sequence spans 196 residues: Peroxiredoxin TSA1-B (196 aa).

Residues 3–161 enclose the Thioredoxin domain; it reads PVVQQPAPSF…SLRLLEAFQF (159 aa). 45–47 lines the substrate pocket; that stretch reads TFV. Residue cysteine 48 is the Cysteine sulfenic acid (-SOH) intermediate of the active site. Arginine 124 is a substrate binding site. Positions 173-196 are disordered; sequence WHPGDETIKPSPEASKEYFNKVNK. The span at 175–196 shows a compositional bias: basic and acidic residues; that stretch reads PGDETIKPSPEASKEYFNKVNK.

The protein belongs to the peroxiredoxin family. AhpC/Prx1 subfamily. In terms of assembly, homodimer; disulfide-linked, upon oxidation.

It localises to the cell surface. The protein localises to the nucleus. Its subcellular location is the cytoplasm. The catalysed reaction is a hydroperoxide + [thioredoxin]-dithiol = an alcohol + [thioredoxin]-disulfide + H2O. Functionally, thiol-specific peroxidase that catalyzes the reduction of hydrogen peroxide and organic hydroperoxides to water and alcohols, respectively. Plays a role in cell protection against oxidative stress by detoxifying peroxides and as sensor of hydrogen peroxide-mediated signaling events. Also involved in the correct composition of the hyphal cell wall. This is Peroxiredoxin TSA1-B from Candida albicans (strain SC5314 / ATCC MYA-2876) (Yeast).